The primary structure comprises 306 residues: Homoserine O-acetyltransferase (306 aa).

The active-site Acyl-thioester intermediate is the C142. Residues K163 and S192 each coordinate substrate. The Proton acceptor role is filled by H235. E237 is a catalytic residue. Position 249 (R249) interacts with substrate.

Belongs to the MetA family.

Its subcellular location is the cytoplasm. It carries out the reaction L-homoserine + acetyl-CoA = O-acetyl-L-homoserine + CoA. Its pathway is amino-acid biosynthesis; L-methionine biosynthesis via de novo pathway; O-acetyl-L-homoserine from L-homoserine: step 1/1. Functionally, transfers an acetyl group from acetyl-CoA to L-homoserine, forming acetyl-L-homoserine. The sequence is that of Homoserine O-acetyltransferase from Clostridium botulinum (strain Alaska E43 / Type E3).